The chain runs to 84 residues: Cytochrome c oxidase subunit 12, mitochondrial (84 aa).

The CHCH domain occupies 27 to 70; the sequence is TKHCWQNYVDYHKCILAKGEDFAPCRQFWLAYRSLCPSGWYQRW. The short motif at 30–40 is the Cx9C motif element; the sequence is CWQNYVDYHKC. Disulfide bonds link cysteine 30/cysteine 62 and cysteine 40/cysteine 51. The Cx10C motif signature appears at 51 to 62; sequence CRQFWLAYRSLC.

It belongs to the cytochrome c oxidase subunit 6B family. As to quaternary structure, component of the cytochrome c oxidase (complex IV, CIV), a multisubunit enzyme composed of 11 subunits. The complex is composed of a catalytic core of 3 subunits Cox1, Cox2 and Cox3, encoded in the mitochondrial DNA, and 8 supernumerary subunits Cox4, Cox5a/Cox5, Cox6, Cox7, Cox8, Cox7a/Cox9, Cox6b/Cox12 and Cox6a/Cox13, which are encoded in the nuclear genome. The complex exists as a monomer or a dimer and forms respiratory supercomplexes (SCs) in the inner mitochondrial membrane with NADH-ubiquinone oxidoreductase (complex I, CI) and ubiquinol-cytochrome c oxidoreductase (cytochrome b-c1 complex, complex III, CIII), resulting in various different assemblies (supercomplexes I(1)IV(1), I(1)III(3)IV(2), III(2)IV(1) and III(2)IV(2) as well as larger supercomplexes of compositions like I(1)III(2)IV(5-6)).

It localises to the mitochondrion inner membrane. It functions in the pathway energy metabolism; oxidative phosphorylation. Component of the cytochrome c oxidase, the last enzyme in the mitochondrial electron transport chain which drives oxidative phosphorylation. The respiratory chain contains 3 multisubunit complexes succinate dehydrogenase (complex II, CII), ubiquinol-cytochrome c oxidoreductase (cytochrome b-c1 complex, complex III, CIII) and cytochrome c oxidase (complex IV, CIV), that cooperate to transfer electrons derived from NADH and succinate to molecular oxygen, creating an electrochemical gradient over the inner membrane that drives transmembrane transport and the ATP synthase. Cytochrome c oxidase is the component of the respiratory chain that catalyzes the reduction of oxygen to water. Electrons originating from reduced cytochrome c in the intermembrane space (IMS) are transferred via the dinuclear copper A center (CU(A)) of Cox2 and heme A of Cox1 to the active site in Cox1, a binuclear center (BNC) formed by heme A3 and copper B (CU(B)). The BNC reduces molecular oxygen to 2 water molecules using 4 electrons from cytochrome c in the IMS and 4 protons from the mitochondrial matrix. The protein is Cytochrome c oxidase subunit 12, mitochondrial (cox-13) of Neurospora crassa (strain ATCC 24698 / 74-OR23-1A / CBS 708.71 / DSM 1257 / FGSC 987).